Consider the following 314-residue polypeptide: Nodulation protein D 1 (314 aa).

The HTH lysR-type domain occupies L6–T63. Positions L23–A42 form a DNA-binding region, H-T-H motif.

The protein belongs to the LysR transcriptional regulatory family.

Its function is as follows. NodD regulates the expression of the nodABCFE genes which encode other nodulation proteins. NodD is also a negative regulator of its own expression. Binds flavonoids as inducers. The chain is Nodulation protein D 1 (nodD1) from Bradyrhizobium diazoefficiens (strain JCM 10833 / BCRC 13528 / IAM 13628 / NBRC 14792 / USDA 110).